A 33-amino-acid chain; its full sequence is Ranatuerin-1T (33 aa).

C27 and C33 are joined by a disulfide.

Expressed by the skin glands.

The protein localises to the secreted. Its function is as follows. Antibacterial activity against Gram-positive bacterium S.aureus and Gram-negative bacterium E.coli. No activity against C.albicans. The chain is Ranatuerin-1T from Rana temporaria (European common frog).